The chain runs to 165 residues: uncharacterized protein (165 aa).

The segment at 49–165 (QLKPQGPKRP…VAQQREIAQK (117 aa)) is disordered. Polar residues predominate over residues 94–106 (MNNNNNYKISYTS). Over residues 120–135 (TLQRTTPQAQPTPQQP) the composition is skewed to low complexity. Positions 139–157 (SRSSGGITGAVNNRPQMVA) are enriched in polar residues.

This is an uncharacterized protein from Caenorhabditis elegans.